The chain runs to 433 residues: Histidinol dehydrogenase 2 (433 aa).

NAD(+) contacts are provided by tyrosine 130, glutamine 192, and asparagine 215. Substrate-binding residues include serine 238, glutamine 260, and histidine 263. The Zn(2+) site is built by glutamine 260 and histidine 263. Active-site proton acceptor residues include glutamate 328 and histidine 329. Substrate-binding residues include histidine 329, aspartate 362, glutamate 416, and histidine 421. Aspartate 362 is a binding site for Zn(2+). Residue histidine 421 coordinates Zn(2+).

This sequence belongs to the histidinol dehydrogenase family. Zn(2+) is required as a cofactor.

The enzyme catalyses L-histidinol + 2 NAD(+) + H2O = L-histidine + 2 NADH + 3 H(+). It participates in amino-acid biosynthesis; L-histidine biosynthesis; L-histidine from 5-phospho-alpha-D-ribose 1-diphosphate: step 9/9. Its function is as follows. Catalyzes the sequential NAD-dependent oxidations of L-histidinol to L-histidinaldehyde and then to L-histidine. The polypeptide is Histidinol dehydrogenase 2 (Trichormus variabilis (strain ATCC 29413 / PCC 7937) (Anabaena variabilis)).